The following is a 233-amino-acid chain: ATP synthase subunit a (233 aa).

6 helical membrane-spanning segments follow: residues Ala27–Leu47, Tyr85–Val105, Val114–Val134, Leu143–Val163, Val189–Val209, and Ser210–Ala230.

This sequence belongs to the ATPase A chain family. In terms of assembly, F-type ATPases have 2 components, CF(1) - the catalytic core - and CF(0) - the membrane proton channel. CF(1) has five subunits: alpha(3), beta(3), gamma(1), delta(1), epsilon(1). CF(0) has three main subunits: a(1), b(2) and c(9-12). The alpha and beta chains form an alternating ring which encloses part of the gamma chain. CF(1) is attached to CF(0) by a central stalk formed by the gamma and epsilon chains, while a peripheral stalk is formed by the delta and b chains.

Its subcellular location is the cell inner membrane. Key component of the proton channel; it plays a direct role in the translocation of protons across the membrane. The sequence is that of ATP synthase subunit a from Solibacter usitatus (strain Ellin6076).